The primary structure comprises 398 residues: Na(+)/H(+) antiporter NhaA 2 (398 aa).

11 helical membrane-spanning segments follow: residues 17-37, 59-79, 95-115, 125-145, 154-174, 179-199, 213-233, 262-282, 288-308, 331-351, and 364-384; these read ILLM…LAGL, LLLW…GLEV, SLPT…YLGF, GWAI…ALLG, VFLL…IALF, LSIT…ILNL, LLLW…GVVI, FMIL…GMSL, PAAL…VLLF, AVAV…SLAF, and LGTL…LTKV.

Belongs to the NhaA Na(+)/H(+) (TC 2.A.33) antiporter family.

It localises to the cell inner membrane. The enzyme catalyses Na(+)(in) + 2 H(+)(out) = Na(+)(out) + 2 H(+)(in). Its function is as follows. Na(+)/H(+) antiporter that extrudes sodium in exchange for external protons. This chain is Na(+)/H(+) antiporter NhaA 2, found in Shewanella denitrificans (strain OS217 / ATCC BAA-1090 / DSM 15013).